Consider the following 122-residue polypeptide: Large ribosomal subunit protein uL14 (122 aa).

Belongs to the universal ribosomal protein uL14 family. As to quaternary structure, part of the 50S ribosomal subunit. Forms a cluster with proteins L3 and L19. In the 70S ribosome, L14 and L19 interact and together make contacts with the 16S rRNA in bridges B5 and B8.

Binds to 23S rRNA. Forms part of two intersubunit bridges in the 70S ribosome. The protein is Large ribosomal subunit protein uL14 of Pseudoalteromonas translucida (strain TAC 125).